Reading from the N-terminus, the 271-residue chain is MTVKQSQASRLSPIFEPCRDDDRAALIGYLPTGYPDVPTSVQAMVALVESGCDIVEVGVPYSDPGMDGPTIARATEAALHGGVRVRDTLAAVEAISAAGGRAVVMTYWNPVLRYGVDAFARDLAAAGGYGLITPDLIPDEAGQWLAASERHGLDRIFLVAPSSTPQRLALTVEASRGFVYAASTMGVTGARDAVSHAAPELVSRVREISDIPVGVGLGVRSREQAAQIGGYADGVIVGSALVSALGDGGLTALRALTEELAAGVRQRAAAS.

Catalysis depends on proton acceptor residues Glu56 and Asp67.

It belongs to the TrpA family. Tetramer of two alpha and two beta chains.

The catalysed reaction is (1S,2R)-1-C-(indol-3-yl)glycerol 3-phosphate + L-serine = D-glyceraldehyde 3-phosphate + L-tryptophan + H2O. Its pathway is amino-acid biosynthesis; L-tryptophan biosynthesis; L-tryptophan from chorismate: step 5/5. The alpha subunit is responsible for the aldol cleavage of indoleglycerol phosphate to indole and glyceraldehyde 3-phosphate. In Mycolicibacterium paratuberculosis (strain ATCC BAA-968 / K-10) (Mycobacterium paratuberculosis), this protein is Tryptophan synthase alpha chain.